Consider the following 378-residue polypeptide: Chitinase (378 aa).

An N-terminal signal peptide occupies residues 1–28 (MNFTVKYSFLVICLLCCLLSTYVSVIEG). A GH18 domain is found at 53-378 (GIIQGYYPSW…AIEYFVESLH (326 aa)). Glutamate 174 (proton donor) is an active-site residue. Residues cysteine 220 and cysteine 230 are joined by a disulfide bond.

It belongs to the glycosyl hydrolase 18 family. As to quaternary structure, forms a hetero-multimeric, high molecular weight complex composed of at least CHT1, SOAP AND WARP. Within the complex, may interact with WARP via a disulfide bond.

Its subcellular location is the secreted. It localises to the cytoplasmic vesicle. It is found in the secretory vesicle. The protein localises to the microneme. The enzyme catalyses Random endo-hydrolysis of N-acetyl-beta-D-glucosaminide (1-&gt;4)-beta-linkages in chitin and chitodextrins.. With respect to regulation, inhibited by allosamidin. Its function is as follows. Endochitinase that cleaves beta-1,4-linkages between tri- and tetramers of N-acetylglucosamine (GlcNAc) from penta- and hexameric chitin oligomers. Does not cleave smaller chitin oligosaccharides. Required to cross the acellular, chitin-containing peritrophic matrix (PM) which is formed around the ingested blood meal in the mosquito midgut allowing the ookinete to invade the mosquito gut epithelium. The polypeptide is Chitinase (Plasmodium falciparum (isolate 3D7)).